We begin with the raw amino-acid sequence, 173 residues long: MLGIADMQPRQLAAQILNFALVLSTAFMMWKGLSVVSDSPSPIVVVLSGSMEPAFQRGDLLFLWNRGADTQVGEIVVYNVKGKDIPIVHRVVRRYGGGKTPLRLLTKGDNNLADDTELYAAGQSFLNRQEDVIGSVVGFIPFVGYVTILLSEHPWLKQVMLGLMGVMVVLQRE.

At 1–15 (MLGIADMQPRQLAAQ) the chain is on the cytoplasmic side. The helical; Signal-anchor for type II membrane protein transmembrane segment at 16-36 (ILNFALVLSTAFMMWKGLSVV) threads the bilayer. Topologically, residues 37-173 (SDSPSPIVVV…MGVMVVLQRE (137 aa)) are lumenal. Active-site charge relay system residues include S50, H89, and D115. The interval 159 to 170 (VMLGLMGVMVVL) is C-terminal short (CTS) helix.

The protein belongs to the peptidase S26B family. In terms of assembly, component of the signal peptidase complex (SPC) composed of a catalytic subunit SEC11 and three accessory subunits SPC1, SPC2 and SPC3. The complex induces a local thinning of the ER membrane which is used to measure the length of the signal peptide (SP) h-region of protein substrates. This ensures the selectivity of the complex towards h-regions shorter than 18-20 amino acids. SPC associates with the translocon complex.

The protein localises to the endoplasmic reticulum membrane. It carries out the reaction Cleavage of hydrophobic, N-terminal signal or leader sequences from secreted and periplasmic proteins.. Functionally, catalytic component of the signal peptidase complex (SPC) which catalyzes the cleavage of N-terminal signal sequences from nascent proteins as they are translocated into the lumen of the endoplasmic reticulum. Specifically cleaves N-terminal signal peptides that contain a hydrophobic alpha-helix (h-region) shorter than 18-20 amino acids. This Pyrenophora tritici-repentis (strain Pt-1C-BFP) (Wheat tan spot fungus) protein is Signal peptidase complex catalytic subunit sec11 (sec11).